The following is a 523-amino-acid chain: GMP synthase [glutamine-hydrolyzing] (523 aa).

The region spanning 8–205 is the Glutamine amidotransferase type-1 domain; that stretch reads KILILDFGSQ…VVNICGCETK (198 aa). The active-site Nucleophile is cysteine 85. Residues histidine 179 and glutamate 181 contribute to the active site. The region spanning 206–398 is the GMPS ATP-PPase domain; sequence WTAENIIEDA…LGLPAEMINR (193 aa). Position 233–239 (233–239) interacts with ATP; sequence SGGVDSS.

Homodimer.

It catalyses the reaction XMP + L-glutamine + ATP + H2O = GMP + L-glutamate + AMP + diphosphate + 2 H(+). It participates in purine metabolism; GMP biosynthesis; GMP from XMP (L-Gln route): step 1/1. Its function is as follows. Catalyzes the synthesis of GMP from XMP. The chain is GMP synthase [glutamine-hydrolyzing] (guaA) from Haemophilus influenzae (strain ATCC 51907 / DSM 11121 / KW20 / Rd).